Reading from the N-terminus, the 691-residue chain is DNA-directed RNA polymerase subunit beta' (691 aa).

Residues cysteine 76, cysteine 78, cysteine 94, and cysteine 97 each contribute to the Zn(2+) site. 3 residues coordinate Mg(2+): aspartate 496, aspartate 498, and aspartate 500.

The protein belongs to the RNA polymerase beta' chain family. RpoC1 subfamily. Requires Mg(2+) as cofactor. It depends on Zn(2+) as a cofactor.

It localises to the plastid. The enzyme catalyses RNA(n) + a ribonucleoside 5'-triphosphate = RNA(n+1) + diphosphate. Its function is as follows. DNA-dependent RNA polymerase catalyzes the transcription of DNA into RNA using the four ribonucleoside triphosphates as substrates. The sequence is that of DNA-directed RNA polymerase subunit beta' from Cuscuta exaltata (Tall dodder).